We begin with the raw amino-acid sequence, 249 residues long: Tryptophan synthase alpha chain (249 aa).

Residues Glu43 and Asp54 each act as proton acceptor in the active site.

This sequence belongs to the TrpA family. As to quaternary structure, tetramer of two alpha and two beta chains.

The enzyme catalyses (1S,2R)-1-C-(indol-3-yl)glycerol 3-phosphate + L-serine = D-glyceraldehyde 3-phosphate + L-tryptophan + H2O. It participates in amino-acid biosynthesis; L-tryptophan biosynthesis; L-tryptophan from chorismate: step 5/5. The alpha subunit is responsible for the aldol cleavage of indoleglycerol phosphate to indole and glyceraldehyde 3-phosphate. In Campylobacter jejuni subsp. jejuni serotype O:23/36 (strain 81-176), this protein is Tryptophan synthase alpha chain.